A 537-amino-acid polypeptide reads, in one-letter code: Proline--tRNA ligase (537 aa).

It belongs to the class-II aminoacyl-tRNA synthetase family. ProS type 3 subfamily. Homodimer.

It is found in the cytoplasm. It catalyses the reaction tRNA(Pro) + L-proline + ATP = L-prolyl-tRNA(Pro) + AMP + diphosphate. Its function is as follows. Catalyzes the attachment of proline to tRNA(Pro) in a two-step reaction: proline is first activated by ATP to form Pro-AMP and then transferred to the acceptor end of tRNA(Pro). The protein is Proline--tRNA ligase of Nanoarchaeum equitans (strain Kin4-M).